We begin with the raw amino-acid sequence, 602 residues long: MSQKIYFKILRFDKTHNDHVYLPGENSVENFQTEGSCVPGRLYFCDPSDPKQNICRYLHYGDVLVDITLPTNDPDFKMIVDPSGTKCCANKIIIGTERELSDPETFAYMASHGVDIHKNYIIHWAFKNFHDRVLFYLLKTNLNENRLRIVEHIFKNPSSLISNRNYNFYIVNFLQRFKKHLNSLTDNQYSDIITNLINLSNKIIEKYFEDMTGNKNFGLDIPEKDWCSYIIENDLDKGSISKILDWSFKNNKKMIIEYVISLFIEDYHYLEKIFSLSCKYHDSRIAEILIKKSINKERCLISACEAGFLEIVECLVKQDVNINLLKGTPLVTACQFGHLLIVDFLVNNSADIHIRDNAPILYACRYGHVDIVDYLIGKGIDIHTVSSQALINACNRGHLNVMELLVEKGADIRSVENILVVEACRNTNADILRFLVRIGVDVLSKGVEPLIVACERGQLAIVQYLIDIGIDICANDNEALIKSCRSGFANIVNLLIENGADVKARDNEALIIACEKCNHTIVTILVSNGADITARNNEALIRACHNEAVGKYFIDFLIEKGADVHARNDIVFDFIHKLFAGNIPKSLKFPFSKNQSDSKLIH.

ANK repeat units follow at residues 133–162, 269–294, 295–324, 325–354, 355–384, 386–414, 416–444, 445–474, 476–504, 506–534, and 536–566; these read VLFYLLKTNLNENRLRIVEHIFKNPSSLIS, YLEKIFSLSCKYHDSRIAEILIKKSI, NKERCLISACEAGFLEIVECLVKQDVNINL, LKGTPLVTACQFGHLLIVDFLVNNSADIHI, RDNAPILYACRYGHVDIVDYLIGKGIDIHT, SSQALINACNRGHLNVMELLVEKGADIRS, ENILVVEACRNTNADILRFLVRIGVDVLS, KGVEPLIVACERGQLAIVQYLIDIGIDICA, DNEALIKSCRSGFANIVNLLIENGADVKA, DNEALIIACEKCNHTIVTILVSNGADITA, and NNEALIRACHNEAVGKYFIDFLIEKGADVHA.

The chain is Putative ankyrin repeat protein L100 from Acanthamoeba polyphaga mimivirus (APMV).